The following is a 64-amino-acid chain: Delta-buthitoxin-Hj2a (64 aa).

Intrachain disulfides connect Cys12–Cys63, Cys16–Cys36, Cys22–Cys46, and Cys26–Cys48. Arg64 carries the arginine amide modification.

This sequence belongs to the long (4 C-C) scorpion toxin superfamily. Sodium channel inhibitor family. Alpha subfamily. As to expression, expressed by the venom gland.

It is found in the secreted. In terms of biological role, this non-amidated recombinant toxin slows fast inactivation on Nav1.1/SCN1A (EC(50)=52.8 nM), Nav1.4/SN4A (EC(50)=32 nM), Nav1.5/SCN5A (EC(50)=116.7 nM), Nav1.6/SCN8A (EC(50)=46.3 nM), and Nav1.7/SCN9A (EC(50)=147.4 nM) voltage-gated sodium channels. On Nav1.1/SCN1A channel, acts as an agonist by inducing a shift in both the voltage dependence of channel inactivation (alpha-toxin activity) and activation (beta-toxin activity). This Hottentotta judaicus (Black scorpion) protein is Delta-buthitoxin-Hj2a.